A 729-amino-acid polypeptide reads, in one-letter code: Fatty acid oxidation complex subunit alpha (729 aa).

Positions 1–189 (MLYKGDTLYL…KIGLVDGVVK (189 aa)) are enoyl-CoA hydratase/isomerase. Residue D296 coordinates substrate. A 3-hydroxyacyl-CoA dehydrogenase region spans residues 311-729 (ETPKQAAVLG…ARPVGDLKTA (419 aa)). NAD(+) is bound by residues M324, D343, 400 to 402 (VVE), K407, and S429. Residue H450 is the For 3-hydroxyacyl-CoA dehydrogenase activity of the active site. N453 contacts NAD(+). Positions 500 and 660 each coordinate substrate. The segment at 708–729 (RHNEPYYPPVEPARPVGDLKTA) is disordered.

The protein in the N-terminal section; belongs to the enoyl-CoA hydratase/isomerase family. In the C-terminal section; belongs to the 3-hydroxyacyl-CoA dehydrogenase family. As to quaternary structure, heterotetramer of two alpha chains (FadB) and two beta chains (FadA).

The enzyme catalyses a (3S)-3-hydroxyacyl-CoA + NAD(+) = a 3-oxoacyl-CoA + NADH + H(+). The catalysed reaction is a (3S)-3-hydroxyacyl-CoA = a (2E)-enoyl-CoA + H2O. It catalyses the reaction a 4-saturated-(3S)-3-hydroxyacyl-CoA = a (3E)-enoyl-CoA + H2O. It carries out the reaction (3S)-3-hydroxybutanoyl-CoA = (3R)-3-hydroxybutanoyl-CoA. The enzyme catalyses a (3Z)-enoyl-CoA = a 4-saturated (2E)-enoyl-CoA. The catalysed reaction is a (3E)-enoyl-CoA = a 4-saturated (2E)-enoyl-CoA. The protein operates within lipid metabolism; fatty acid beta-oxidation. Its function is as follows. Involved in the aerobic and anaerobic degradation of long-chain fatty acids via beta-oxidation cycle. Catalyzes the formation of 3-oxoacyl-CoA from enoyl-CoA via L-3-hydroxyacyl-CoA. It can also use D-3-hydroxyacyl-CoA and cis-3-enoyl-CoA as substrate. The polypeptide is Fatty acid oxidation complex subunit alpha (Escherichia coli O17:K52:H18 (strain UMN026 / ExPEC)).